A 328-amino-acid polypeptide reads, in one-letter code: Tetraacyldisaccharide 4'-kinase (328 aa).

59–66 (TAGGNGKT) serves as a coordination point for ATP.

The protein belongs to the LpxK family.

It carries out the reaction a lipid A disaccharide + ATP = a lipid IVA + ADP + H(+). It participates in glycolipid biosynthesis; lipid IV(A) biosynthesis; lipid IV(A) from (3R)-3-hydroxytetradecanoyl-[acyl-carrier-protein] and UDP-N-acetyl-alpha-D-glucosamine: step 6/6. Its function is as follows. Transfers the gamma-phosphate of ATP to the 4'-position of a tetraacyldisaccharide 1-phosphate intermediate (termed DS-1-P) to form tetraacyldisaccharide 1,4'-bis-phosphate (lipid IVA). This Aliivibrio fischeri (strain ATCC 700601 / ES114) (Vibrio fischeri) protein is Tetraacyldisaccharide 4'-kinase.